The primary structure comprises 65 residues: MKPGIHPEYGKARVICACGETFETGSTKKEIRVEICSKCHPFYTGSQRTVEARGRAEQFKKKYGL.

Cys16, Cys18, Cys36, and Cys39 together coordinate Zn(2+).

This sequence belongs to the bacterial ribosomal protein bL31 family. Type A subfamily. As to quaternary structure, part of the 50S ribosomal subunit. Zn(2+) is required as a cofactor.

Binds the 23S rRNA. The polypeptide is Large ribosomal subunit protein bL31 (Carboxydothermus hydrogenoformans (strain ATCC BAA-161 / DSM 6008 / Z-2901)).